Consider the following 321-residue polypeptide: Cytochrome f (321 aa).

The signal sequence occupies residues 1–38 (MKKNFYTISKTMSRSLKLILFSVFIGFSIFLIPQPTWA). Heme contacts are provided by tyrosine 39, cysteine 59, cysteine 62, and histidine 63. Residues 288-308 (VIGMIIFFIGVGLSQIMLVLK) traverse the membrane as a helical segment.

Belongs to the cytochrome f family. In terms of assembly, the 4 large subunits of the cytochrome b6-f complex are cytochrome b6, subunit IV (17 kDa polypeptide, PetD), cytochrome f and the Rieske protein, while the 4 small subunits are PetG, PetL, PetM and PetN. The complex functions as a dimer. The cofactor is heme.

The protein resides in the cellular thylakoid membrane. Its function is as follows. Component of the cytochrome b6-f complex, which mediates electron transfer between photosystem II (PSII) and photosystem I (PSI), cyclic electron flow around PSI, and state transitions. In Prochlorococcus marinus (strain NATL1A), this protein is Cytochrome f.